The chain runs to 968 residues: MPFTLGQRWISDTESELGLGTVVALDARMVTLLFPAIGENRLYSRNDSPITRVMFNPGDTITSHEGWQLHVDKVNEENGLLSYTGTRLDTQEANVTLREVLLDSKLVFSKPQDRLFAGQIDRMDRFALRYRARKFQSEQYRMPWSGLRGQRTSLIPHQLHIAHDVGRRHAPRVLLADEVGLGKTIEAGMILHQQLLSGAAERVLIVVPETLQHQWLVEMLRRFNLRFSLFDDERYAEAQHDAYNPFETEQLVICSLDFVRRSKQRLEHLCDAEWDLMVVDEAHHLVWSEEAPSREYQAIEQLAERVPGILLLTATPEQLGMESHFARLRLLDPNRFHDFEQFVEEQQNYRPVADAVALLLAGNKLSDSELNTLGDLIGEQDIEPLLQAANSDREDAQAARQELISMLMDRHGTSRVLFRNTRNGVKGFPKRELHTIRLPLPTQYQTAIKVSGIMGARKTAEERARDMLYPEQIYQEFEGDTGTWWNFDPRVEWLMGYLTSHRSQKVLVICAKAATALQLEQVLREREGIRAAVFHEGMSIIERDRAAAWFAEEDTGAQVLLCSEIGSEGRNFQFASNLVMFDLPFNPDLLEQRIGRLDRIGQAHDIQIHVPYLEKTAQSVLVRWYHEGLDAFEHTCPTGRTVYDSVHDELINYLAAPESIDGFDDLIKSCRQQHDALKAQLEQGRDRLLEIHSNGGEKAQALAESIEEQDDDTSLIAFSMNLFDIVGINQDDRGENLIVLTPSDHMLVPDFPGLPEDGCTITFERDVALSREDAQFITWEHPLIRNGLDLILSGDTGSSTISLLKNKALPVGTLLLELIYVVEAQAPKQLQLNRFLPATPVRMLLDKNGNNLAAQVEFESFNRQLSAVNRHTGSKLVNAVQQDVHAILQQGEAQIAKAAQGLIDAARNEADEKLTAELSRLEALKAVNPNIRDDELAAIESNRQQVMDALAQAGWRLDALRLIVVTHQ.

One can recognise a Helicase ATP-binding domain in the interval Asp164–Asn334. An ATP-binding site is contributed by Asp177–Thr184. A DEAH box motif is present at residues Asp280 to His283. Residues Arg490–Asp644 enclose the Helicase C-terminal domain.

Belongs to the SNF2/RAD54 helicase family. RapA subfamily. Interacts with the RNAP. Has a higher affinity for the core RNAP than for the holoenzyme. Its ATPase activity is stimulated by binding to RNAP.

Its function is as follows. Transcription regulator that activates transcription by stimulating RNA polymerase (RNAP) recycling in case of stress conditions such as supercoiled DNA or high salt concentrations. Probably acts by releasing the RNAP, when it is trapped or immobilized on tightly supercoiled DNA. Does not activate transcription on linear DNA. Probably not involved in DNA repair. The chain is RNA polymerase-associated protein RapA from Klebsiella pneumoniae subsp. pneumoniae (strain ATCC 700721 / MGH 78578).